A 96-amino-acid chain; its full sequence is MEVTDVRLRRVNTEGRMKAIASITLDNEFVVHDIRVIDGNNGLFVAMPSKRTPDGEFRDIAHPINSATRGKIQEAILAEYHRLGKLEEELEEAGAS.

Belongs to the SpoVG family.

In terms of biological role, could be involved in septation. The sequence is that of Putative septation protein SpoVG from Geobacillus sp. (strain WCH70).